A 538-amino-acid chain; its full sequence is Chaperonin GroEL 1 (538 aa).

ATP-binding positions include 29 to 32 (TLGP), 86 to 90 (DGTTT), Gly-413, and Asp-494.

Belongs to the chaperonin (HSP60) family. As to quaternary structure, forms a cylinder of 14 subunits composed of two heptameric rings stacked back-to-back. Interacts with the co-chaperonin GroES.

It is found in the cytoplasm. The enzyme catalyses ATP + H2O + a folded polypeptide = ADP + phosphate + an unfolded polypeptide.. In terms of biological role, together with its co-chaperonin GroES, plays an essential role in assisting protein folding. The GroEL-GroES system forms a nano-cage that allows encapsulation of the non-native substrate proteins and provides a physical environment optimized to promote and accelerate protein folding. The polypeptide is Chaperonin GroEL 1 (Mycobacterium avium (strain 104)).